The following is a 1553-amino-acid chain: Sterol 3-beta-glucosyltransferase (1553 aa).

Polar residues-rich tracts occupy residues 1 to 10 (MASSQPTSSG) and 25 to 36 (LNTETSSSQHRA). Disordered regions lie at residues 1–106 (MASS…NEED) and 189–270 (PASA…GLAP). A compositionally biased stretch (basic and acidic residues) spans 90–100 (LPDRLKDNGKE). Over residues 211–222 (LLQSVPSLSRLS) the composition is skewed to low complexity. The segment covering 223–232 (SSHKSKKTKQ) has biased composition (basic residues). 2 GRAM domains span residues 323–370 (KKLK…HLPK) and 464–495 (SLQR…EEAQ). The 97-residue stretch at 374 to 470 (EIAKSGYLSK…WVKSLQRVIF (97 aa)) folds into the PH domain. Disordered stretches follow at residues 542 to 569 (SPED…GSPR), 611 to 662 (FSRR…FDDP), and 805 to 825 (GKKH…VEDD). The segment covering 633–650 (LHGDGRRSFSKPRHEPHA) has biased composition (basic and acidic residues). Over residues 651 to 662 (STDSYAQSFDDP) the composition is skewed to polar residues. A compositionally biased stretch (basic and acidic residues) spans 810-819 (DHPAGRRTER). Positions 834–900 (ARFQAHFALP…KDIETVDKEK (67 aa)) constitute a GRAM 3 domain. Residues S1020, R1021, D1023, A1328, H1330, H1343, S1346, G1347, T1348, D1367, and Q1368 each contribute to the UDP-alpha-D-glucose site. 2 disordered regions span residues 1446-1504 (KHQS…GSMS) and 1527-1553 (PALG…VKYV). Positions 1466-1488 (PEDDQGQAAEEDDIDADDEEEES) are enriched in acidic residues.

The protein belongs to the glycosyltransferase 28 family.

It is found in the cytoplasm. The protein localises to the preautophagosomal structure membrane. It carries out the reaction a sterol + UDP-alpha-D-glucose = a sterol 3-beta-D-glucoside + UDP + H(+). The catalysed reaction is ergosterol + UDP-alpha-D-glucose = ergosteryl 3-beta-D-glucoside + UDP + H(+). In terms of biological role, sterol glycosyltransferase responsible for the glycosylation of ergosterol to form ergosterol-glucoside. In Neurospora crassa (strain ATCC 24698 / 74-OR23-1A / CBS 708.71 / DSM 1257 / FGSC 987), this protein is Sterol 3-beta-glucosyltransferase (apg-12).